The following is a 403-amino-acid chain: Na(+)-translocating NADH-quinone reductase subunit B (403 aa).

Helical transmembrane passes span Met-56–Gly-76, Ala-121–Phe-141, Leu-164–Gly-184, Gly-225–Gly-245, Gly-260–Thr-280, Ile-287–Ser-307, Met-312–Phe-332, Trp-348–Phe-368, and Gly-371–Val-391. Thr-230 is subject to FMN phosphoryl threonine.

The protein belongs to the NqrB/RnfD family. In terms of assembly, composed of six subunits; NqrA, NqrB, NqrC, NqrD, NqrE and NqrF. Requires FMN as cofactor.

The protein localises to the cell inner membrane. The enzyme catalyses a ubiquinone + n Na(+)(in) + NADH + H(+) = a ubiquinol + n Na(+)(out) + NAD(+). Its function is as follows. NQR complex catalyzes the reduction of ubiquinone-1 to ubiquinol by two successive reactions, coupled with the transport of Na(+) ions from the cytoplasm to the periplasm. NqrA to NqrE are probably involved in the second step, the conversion of ubisemiquinone to ubiquinol. This Pseudomonas aeruginosa (strain LESB58) protein is Na(+)-translocating NADH-quinone reductase subunit B.